Reading from the N-terminus, the 214-residue chain is Phosphoenolpyruvate guanylyltransferase 2 (214 aa).

Phosphoenolpyruvate is bound by residues threonine 135, glycine 150, and serine 153.

This sequence belongs to the CofC family.

It carries out the reaction phosphoenolpyruvate + GTP + H(+) = enolpyruvoyl-2-diphospho-5'-guanosine + diphosphate. It functions in the pathway cofactor biosynthesis; coenzyme F420 biosynthesis. Functionally, guanylyltransferase that catalyzes the activation of phosphoenolpyruvate (PEP) as enolpyruvoyl-2-diphospho-5'-guanosine, via the condensation of PEP with GTP. It is involved in the biosynthesis of coenzyme F420, a hydride carrier cofactor. The chain is Phosphoenolpyruvate guanylyltransferase 2 from Rhodococcus jostii (strain RHA1).